The chain runs to 498 residues: Pyruvate kinase (498 aa).

Arg-53 contacts substrate. Asn-55, Ser-57, Asp-87, and Thr-88 together coordinate K(+). An ATP-binding site is contributed by 55–58 (NFSH). Residues Arg-94 and Lys-178 each contribute to the ATP site. Position 240 (Glu-240) interacts with Mg(2+). Substrate is bound by residues Gly-263, Asp-264, and Thr-296. Asp-264 is a Mg(2+) binding site.

The protein belongs to the pyruvate kinase family. As to quaternary structure, homotetramer. Mg(2+) serves as cofactor. K(+) is required as a cofactor.

It carries out the reaction pyruvate + ATP = phosphoenolpyruvate + ADP + H(+). It participates in carbohydrate degradation; glycolysis; pyruvate from D-glyceraldehyde 3-phosphate: step 5/5. The sequence is that of Pyruvate kinase (PYK) from Trypanoplasma borreli.